Here is a 472-residue protein sequence, read N- to C-terminus: Cannabinoid receptor 1 (472 aa).

Residues 1–116 (MKSILDGLAD…CFMILNPSQQ (116 aa)) are Extracellular-facing. The tract at residues 2-23 (KSILDGLADTTFRTITTDLLYV) is required for mitochondrial localization. Residues asparagine 77 and asparagine 83 are each glycosylated (N-linked (GlcNAc...) asparagine). A helical membrane pass occupies residues 117-142 (LAIAVLSLTLGTFTVLENLLVLCVIL). At 143-154 (HSRSLRCRPSYH) the chain is on the cytoplasmic side. The helical transmembrane segment at 155–175 (FIGSLAVADLLGSVIFVYSFV) threads the bilayer. The Extracellular portion of the chain corresponds to 176–187 (DFHVFHRKDSPN). A helical transmembrane segment spans residues 188–212 (VFLFKLGGVTASFTASVGSLFLTAI). Topologically, residues 213–232 (DRYISIHRPLAYKKIVTRPK) are cytoplasmic. Residues 233–255 (AVVAFCLMWTIAIVIAVLPLLGW) form a helical membrane-spanning segment. Topologically, residues 256 to 273 (NCKKLQSVCSDIFPLIDE) are extracellular. A helical transmembrane segment spans residues 274 to 299 (TYLMFWIGVTSVLLLFIVYAYMYILW). Residues 300 to 344 (KAHIHAVRMIQRGTQKSIIIHTSEDGKVQVTRPDQARMDIRLAKT) are Cytoplasmic-facing. The chain crosses the membrane as a helical span at residues 345 to 365 (LVLILVVLIICWGPLLAIMVY). Topologically, residues 366 to 377 (DVFGKMNKLIKT) are extracellular. Residues 378–399 (VFAFCSMLCLLNSTVNPIIYAL) form a helical membrane-spanning segment. Residues 400-472 (RSKDLRHAFR…VSTNTSAKAL (73 aa)) lie on the Cytoplasmic side of the membrane. Cysteine 415 carries S-palmitoyl cysteine lipidation. Phosphoserine occurs at positions 425 and 429.

This sequence belongs to the G-protein coupled receptor 1 family. As to quaternary structure, interacts (via C-terminus) with CNRIP1; this interaction attenuates constitutive, but not agonist-dependent, inhibition of voltage-gated Ca(2+) channels in neurons. Associates with G protein alpha subunits, including G(i) alpha-1/GNAI1, G(i) alpha-3/GNAI3 and G(o)-alpha/GNAO1; palmitoylation is important for interaction with GNAI3 and GNAO1. Post-translationally, palmitoylation at Cys-415 is important for recruitment at plasma membrane and lipid rafts and association with G protein alpha subunits. In terms of tissue distribution, expressed in cerebral arterial muscle cells and cerebral cortex (at protein level).

The protein resides in the cell membrane. It localises to the membrane raft. Its subcellular location is the mitochondrion outer membrane. The protein localises to the cell projection. It is found in the axon. The protein resides in the presynapse. Hemopressin, a peptide derived from hemoglobin subunit alpha (HBA1 and/or HBA2), acts as an antagonist peptide: hemopressin-binding efficiently blocks cannabinoid receptor CNR1 and subsequent signaling. G-protein coupled receptor for endogenous cannabinoids (eCBs), including N-arachidonoylethanolamide (also called anandamide or AEA) and 2-arachidonoylglycerol (2-AG), as well as phytocannabinoids, such as delta(9)-tetrahydrocannabinol (THC). Mediates many cannabinoid-induced effects, acting, among others, on food intake, memory loss, gastrointestinal motility, catalepsy, ambulatory activity, anxiety, chronic pain. Signaling typically involves reduction in cyclic AMP. In the hypothalamus, may have a dual effect on mitochondrial respiration depending upon the agonist dose and possibly upon the cell type. Increases respiration at low doses, while decreases respiration at high doses. At high doses, CNR1 signal transduction involves G-protein alpha-i protein activation and subsequent inhibition of mitochondrial soluble adenylate cyclase, decrease in cyclic AMP concentration, inhibition of protein kinase A (PKA)-dependent phosphorylation of specific subunits of the mitochondrial electron transport system, including NDUFS2. In the hypothalamus, inhibits leptin-induced reactive oxygen species (ROS) formation and mediates cannabinoid-induced increase in SREBF1 and FASN gene expression. In response to cannabinoids, drives the release of orexigenic beta-endorphin, not that of melanocyte-stimulating hormone alpha/alpha-MSH, from hypothalamic POMC neurons, hence promoting food intake. In the hippocampus, regulates cellular respiration and energy production in response to cannabinoids. Involved in cannabinoid-dependent depolarization-induced suppression of inhibition (DSI), a process in which depolarization of CA1 postsynaptic pyramidal neurons mobilizes eCBs, which retrogradely activate presynaptic CB1 receptors, transiently decreasing GABAergic inhibitory neurotransmission. Also reduces excitatory synaptic transmission. In superior cervical ganglions and cerebral vascular smooth muscle cells, inhibits voltage-gated Ca(2+) channels in a constitutive, as well as agonist-dependent manner. In cerebral vascular smooth muscle cells, inhibition of voltage-gated Ca(2+) channels leads to vasodilation and decrease in vascular tone. Induces leptin production in adipocytes and reduces LRP2-mediated leptin clearance in the kidney, hence participating in hyperleptinemia. In adipose tissue, CNR1 signaling leads to increased expression of SREBF1, ACACA and FASN genes. In the liver, activation by endocannabinoids leads to increased de novo lipogenesis and reduced fatty acid catabolism, associated with increased expression of SREBF1/SREBP-1, GCK, ACACA, ACACB and FASN genes. May also affect de novo cholesterol synthesis and HDL-cholesteryl ether uptake. Peripherally modulates energy metabolism. In high carbohydrate diet-induced obesity, may decrease the expression of mitochondrial dihydrolipoyl dehydrogenase/DLD in striated muscles, as well as that of selected glucose/ pyruvate metabolic enzymes, hence affecting energy expenditure through mitochondrial metabolism. In response to cannabinoid anandamide, elicits a pro-inflammatory response in macrophages, which involves NLRP3 inflammasome activation and IL1B and IL18 secretion. In macrophages infiltrating pancreatic islets, this process may participate in the progression of type-2 diabetes and associated loss of pancreatic beta-cells. The polypeptide is Cannabinoid receptor 1 (CNR1) (Felis catus (Cat)).